The primary structure comprises 61 residues: Small ribosomal subunit protein uS14 (61 aa).

4 residues coordinate Zn(2+): Cys24, Cys27, Cys40, and Cys43.

Belongs to the universal ribosomal protein uS14 family. Zinc-binding uS14 subfamily. Part of the 30S ribosomal subunit. Contacts proteins S3 and S10. Requires Zn(2+) as cofactor.

In terms of biological role, binds 16S rRNA, required for the assembly of 30S particles and may also be responsible for determining the conformation of the 16S rRNA at the A site. This is Small ribosomal subunit protein uS14 from Moorella thermoacetica (strain ATCC 39073 / JCM 9320).